The sequence spans 507 residues: Tabersonine/lochnericine 19-hydroxylase (507 aa).

A helical membrane pass occupies residues 8–28 (FFVLLLPFFIGIAFIYKLWNF). N-linked (GlcNAc...) asparagine glycosylation occurs at N167. Residue C447 coordinates heme.

This sequence belongs to the cytochrome P450 family. Requires heme as cofactor. Confined to roots.

The protein resides in the endoplasmic reticulum membrane. It carries out the reaction (-)-tabersonine + reduced [NADPH--hemoprotein reductase] + O2 = (-)-(R)-19-hydroxytabersonine + oxidized [NADPH--hemoprotein reductase] + H2O + H(+). The enzyme catalyses lochnericine + reduced [NADPH--hemoprotein reductase] + O2 = horhammericine + oxidized [NADPH--hemoprotein reductase] + H2O + H(+). It catalyses the reaction (-)-vincadifformine + reduced [NADPH--hemoprotein reductase] + O2 = (-)-minovincinine + oxidized [NADPH--hemoprotein reductase] + H2O + H(+). The protein operates within alkaloid biosynthesis. Functionally, component of the monoterpenoid indole alkaloids (MIAs, e.g. echitovenine, tabersonine, lochnericine, 19-hydroxytabersonine and horhammericine) biosynthetic pathway; MIAs are used in cancer treatment and other medical applications. Cytochrome P450 catalyzing the conversion of (-)-tabersonine to 19-hydroxytabersonine, of lochnericine to horhammericine and of (-)-vincadifformine to (-)-minovincinine. The protein is Tabersonine/lochnericine 19-hydroxylase of Catharanthus roseus (Madagascar periwinkle).